Here is a 467-residue protein sequence, read N- to C-terminus: UDP-N-acetylmuramate--L-alanine ligase (467 aa).

Residue glycine 114–threonine 120 participates in ATP binding.

It belongs to the MurCDEF family.

It localises to the cytoplasm. It carries out the reaction UDP-N-acetyl-alpha-D-muramate + L-alanine + ATP = UDP-N-acetyl-alpha-D-muramoyl-L-alanine + ADP + phosphate + H(+). It participates in cell wall biogenesis; peptidoglycan biosynthesis. In terms of biological role, cell wall formation. This Bradyrhizobium sp. (strain ORS 278) protein is UDP-N-acetylmuramate--L-alanine ligase.